The following is a 203-amino-acid chain: NADH dehydrogenase [ubiquinone] 1 alpha subcomplex assembly factor 4 (203 aa).

It belongs to the NDUFAF4 family. Together with NdufAF3 associates with mitochondrial complex I assembly intermediates during its biogenesis.

Involved in the assembly of mitochondrial NADH:ubiquinone oxidoreductase complex (complex I). Together with NdufAF3, involved in biogenesis of complex 1 modules N, Q and P-peripheral, but not the P-distal module. Required for recruitment of the complex I assembly factor Timmdc1 to complex 1 assembly intermediates. This chain is NADH dehydrogenase [ubiquinone] 1 alpha subcomplex assembly factor 4, found in Drosophila melanogaster (Fruit fly).